A 142-amino-acid chain; its full sequence is Putative pre-16S rRNA nuclease (142 aa).

Belongs to the YqgF nuclease family.

It localises to the cytoplasm. Its function is as follows. Could be a nuclease involved in processing of the 5'-end of pre-16S rRNA. In Chloroflexus aggregans (strain MD-66 / DSM 9485), this protein is Putative pre-16S rRNA nuclease.